The chain runs to 462 residues: Syringate O-demethylase (462 aa).

Belongs to the GcvT family.

The catalysed reaction is syringate + (6S)-5,6,7,8-tetrahydrofolate = 3-O-methylgallate + (6S)-5-methyl-5,6,7,8-tetrahydrofolate. Its pathway is secondary metabolite metabolism; lignin degradation. Functionally, involved in the catabolism of syringate. Catalyzes the conversion of syringate to 3-O-methylgallate (3MGA) in the presence of tetrahydrofolate. Has weak activity with vanillate and 3-O-methylgallate. This chain is Syringate O-demethylase, found in Sphingobium sp. (strain NBRC 103272 / SYK-6).